The sequence spans 252 residues: Deoxyuridine 5'-triphosphate nucleotidohydrolase, mitochondrial (252 aa).

A mitochondrion-targeting transit peptide spans methionine 1–glycine 69. 3 positions are modified to phosphoserine: cysteine 11, serine 88, and serine 99. A disordered region spans residues tryptophan 78–alanine 104. DUTP-binding positions include arginine 173 to glycine 175, glycine 187 to tyrosine 193, glycine 198, arginine 241, and phenylalanine 246 to glycine 247.

Belongs to the dUTPase family. As to quaternary structure, homotrimer. Mg(2+) is required as a cofactor. Post-translationally, nuclear isoform 2 is phosphorylated in vivo on Ser-11, a reaction that can be catalyzed in vitro by CDC2. Phosphorylation in mature T-cells occurs in a cell cycle-dependent manner. Isoform 3 is not phosphorylated. As to expression, found in a variety of tissues. Isoform 3 expression is constitutive, while isoform 2 expression correlates with the onset of DNA replication (at protein level). Isoform 2 degradation coincides with the cessation of nuclear DNA replication (at protein level).

The protein resides in the nucleus. Its subcellular location is the mitochondrion. The enzyme catalyses dUTP + H2O = dUMP + diphosphate + H(+). It functions in the pathway pyrimidine metabolism; dUMP biosynthesis; dUMP from dCTP (dUTP route): step 2/2. With respect to regulation, phosphorylation is necessary for activity. In terms of biological role, catalyzes the cleavage of 2'-deoxyuridine 5'-triphosphate (dUTP) into 2'-deoxyuridine 5'-monophosphate (dUMP) and inorganic pyrophosphate and through its action efficiently prevents uracil misincorporation into DNA and at the same time provides dUMP, the substrate for de novo thymidylate biosynthesis. Inhibits peroxisome proliferator-activated receptor (PPAR) activity by binding of its N-terminal to PPAR, preventing the latter's dimerization with retinoid X receptor. Essential for embryonic development. This Homo sapiens (Human) protein is Deoxyuridine 5'-triphosphate nucleotidohydrolase, mitochondrial (DUT).